The chain runs to 72 residues: Translation initiation factor IF-1 (72 aa).

An S1-like domain is found at 1-72 (MAKEEAIEVE…TRGRIIFRER (72 aa)).

It belongs to the IF-1 family. As to quaternary structure, component of the 30S ribosomal translation pre-initiation complex which assembles on the 30S ribosome in the order IF-2 and IF-3, IF-1 and N-formylmethionyl-tRNA(fMet); mRNA recruitment can occur at any time during PIC assembly.

The protein localises to the cytoplasm. Its function is as follows. One of the essential components for the initiation of protein synthesis. Stabilizes the binding of IF-2 and IF-3 on the 30S subunit to which N-formylmethionyl-tRNA(fMet) subsequently binds. Helps modulate mRNA selection, yielding the 30S pre-initiation complex (PIC). Upon addition of the 50S ribosomal subunit IF-1, IF-2 and IF-3 are released leaving the mature 70S translation initiation complex. This is Translation initiation factor IF-1 from Treponema denticola (strain ATCC 35405 / DSM 14222 / CIP 103919 / JCM 8153 / KCTC 15104).